Here is a 473-residue protein sequence, read N- to C-terminus: Gamma-aminobutyric acid receptor subunit beta-3 (473 aa).

The signal sequence occupies residues 1–25; it reads MWGFAGGRLFGIFSAPVLVAVVCCA. The Extracellular segment spans residues 26 to 246; sequence QSVNDPGNMS…FRLKRNIGYF (221 aa). N-linked (GlcNAc...) asparagine glycans are attached at residues Asn-33 and Asn-105. Tyr-122 contacts histamine. Cys-161 and Cys-175 are joined by a disulfide. N-linked (GlcNAc...) asparagine glycosylation occurs at Asn-174. 4-aminobutanoate-binding residues include Glu-180, Tyr-182, and Thr-227. Histamine contacts are provided by residues 181–182 and Thr-227; that span reads SY. A helical membrane pass occupies residues 247-267; it reads ILQTYMPSILITILSWVSFWI. Topologically, residues 268-271 are cytoplasmic; it reads NYDA. Residues 272-292 traverse the membrane as a helical segment; the sequence is SAARVALGITTVLTMTTINTH. Topologically, residues 293–304 are extracellular; that stretch reads LRETLPKIPYVK. A helical membrane pass occupies residues 305 to 328; sequence AIDMYLMGCFVFVFLALLEYAFVN. The Cytoplasmic segment spans residues 329–447; it reads YIFFGRGPQR…KIPDLTDVNA (119 aa). A helical transmembrane segment spans residues 448–470; sequence IDRWSRIVFPFTFSLFNLVYWLY. Topologically, residues 471–473 are extracellular; sequence YVN.

It belongs to the ligand-gated ion channel (TC 1.A.9) family. Gamma-aminobutyric acid receptor (TC 1.A.9.5) subfamily. GABRB3 sub-subfamily. Heteropentamer, formed by a combination of alpha (GABRA1-6), beta (GABRB1-3), gamma (GABRG1-3), delta (GABRD), epsilon (GABRE), rho (GABRR1-3), pi (GABRP) and theta (GABRQ) chains, each subunit exhibiting distinct physiological and pharmacological properties. Can form functional homopentamers (in vitro). Interacts with UBQLN1. May interact with KIF21B. Identified in a complex of 720 kDa composed of LHFPL4, NLGN2, GABRA1, GABRB2, GABRG2 and GABRB3. Interacts with LHFPL4. Interacts with GIT1; this interaction is required for synaptic GABRB3 surface stability and inhibitory synapse strength.

It localises to the postsynaptic cell membrane. The protein resides in the cell membrane. The protein localises to the cytoplasmic vesicle membrane. It catalyses the reaction chloride(in) = chloride(out). Its activity is regulated as follows. Potentiated by histamine. Its function is as follows. Beta subunit of the heteropentameric ligand-gated chloride channel gated by gamma-aminobutyric acid (GABA), a major inhibitory neurotransmitter in the brain. GABA-gated chloride channels, also named GABA(A) receptors (GABAAR), consist of five subunits arranged around a central pore and contain GABA active binding site(s) located at the alpha and beta subunit interface(s). GABAARs containing beta-3/GABRB3 subunit are found at both synaptic and extrasynaptic sites. When activated by GABA, GABAARs selectively allow the flow of chloride anions across the cell membrane down their electrochemical gradient. Chloride influx into the postsynaptic neuron following GABAAR opening decreases the neuron ability to generate a new action potential, thereby reducing nerve transmission. GABAARs containing alpha-1 and beta-3 subunits exhibit synaptogenic activity; the gamma-2 subunit being necessary but not sufficient to induce rapid synaptic contacts formation. Extrasynaptic beta-3 receptors contribute to the tonic GABAergic inhibition. GABAARs containing alpha-1, beta-3 and epsilon subunits may permit spontaneous chloride channel activity while preserving the structural information required for GABA-gated openings. Beta-containing GABAARs can simultaneously bind GABA and histamine where histamine binds at the interface of two neighboring beta subunits, which may be involved in the regulation of sleep and wakefulness. Plays an important role in somatosensation and in the production of antinociception. The polypeptide is Gamma-aminobutyric acid receptor subunit beta-3 (Mus musculus (Mouse)).